A 215-amino-acid chain; its full sequence is Large ribosomal subunit protein uL16m (215 aa).

A mitochondrion-targeting transit peptide spans 1-36; that stretch reads MALQQYNKFPFFFSGILGPTRLNGLQMPPIQTMVRW.

Belongs to the universal ribosomal protein uL16 family. In terms of assembly, component of the mitochondrial large ribosomal subunit (mt-LSU). Mature yeast 74S mitochondrial ribosomes consist of a small (37S) and a large (54S) subunit. The 37S small subunit contains a 15S ribosomal RNA (15S mt-rRNA) and at least 32 different proteins. The 54S large subunit contains a 21S rRNA (21S mt-rRNA) and at least 45 different proteins.

It is found in the mitochondrion. Component of the mitochondrial ribosome (mitoribosome), a dedicated translation machinery responsible for the synthesis of mitochondrial genome-encoded proteins, including at least some of the essential transmembrane subunits of the mitochondrial respiratory chain. The mitoribosomes are attached to the mitochondrial inner membrane and translation products are cotranslationally integrated into the membrane. This chain is Large ribosomal subunit protein uL16m (mrpl16), found in Schizosaccharomyces pombe (strain 972 / ATCC 24843) (Fission yeast).